Reading from the N-terminus, the 159-residue chain is MSDDEHHFEASESGASKTYPQSAGNIRKGGHIVIKNRPCKVVEVSTSKTGKHGHAKCHFVAIDIFTAKKLEDIVPSSHNCDVPHVNRVDYQLIDITEDGFVSLLTDSGGTKDDLKLPTDDGLTAQMRLGFDEGKDIVVSVMSSMGEEQICAVKEVGGGK.

A compositionally biased stretch (basic and acidic residues) spans 1-10; the sequence is MSDDEHHFEA. The segment at 1–25 is disordered; it reads MSDDEHHFEASESGASKTYPQSAGN. Serine 2 is subject to Phosphoserine. Residues 13-24 are compositionally biased toward polar residues; that stretch reads SGASKTYPQSAG. The residue at position 51 (lysine 51) is a Hypusine.

It belongs to the eIF-5A family. As to quaternary structure, homodimer. Interacts with AHK4 and AHP1. Cytokinin regulates the formation of the AHP1-AHK4-ELF5A-2 complex. In terms of processing, lys-51 undergoes hypusination, a unique post-translational modification that consists in the addition of a butylamino group from spermidine to lysine side chain, leading to the formation of the unusual amino acid hypusine. eIF-5As are the only known proteins to undergo this modification, which is essential for their function. In terms of tissue distribution, ubiquitous. In roots, expressed mostly inside the stele of the mature zone.

The protein localises to the cytoplasm. Its subcellular location is the nucleus. Functionally, translation factor that promotes translation elongation and termination, particularly upon ribosome stalling at specific amino acid sequence contexts. Binds between the exit (E) and peptidyl (P) site of the ribosome and promotes rescue of stalled ribosome: specifically required for efficient translation of polyproline-containing peptides as well as other motifs that stall the ribosome. Acts as a ribosome quality control (RQC) cofactor by joining the RQC complex to facilitate peptidyl transfer during CAT tailing step. Regulates cytokinin-mediated root protoxylem specification and represses secifically the expression of AHP6. Regulates the induction of programmed cell death caused by infection with virulent pathogen. The chain is Eukaryotic translation initiation factor 5A-2 (ELF5A-2) from Arabidopsis thaliana (Mouse-ear cress).